Here is a 216-residue protein sequence, read N- to C-terminus: Sugar fermentation stimulation protein homolog (216 aa).

This sequence belongs to the SfsA family.

The sequence is that of Sugar fermentation stimulation protein homolog from Thermoplasma volcanium (strain ATCC 51530 / DSM 4299 / JCM 9571 / NBRC 15438 / GSS1).